We begin with the raw amino-acid sequence, 660 residues long: Translation factor GUF1 homolog, mitochondrial (660 aa).

The 182-residue stretch at 62 to 243 (EKIRNFSIIA…TIIEKIPPPT (182 aa)) folds into the tr-type G domain. GTP contacts are provided by residues 71 to 78 (AHIDHGKS), 136 to 140 (DTPGH), and 190 to 193 (NKID).

This sequence belongs to the TRAFAC class translation factor GTPase superfamily. Classic translation factor GTPase family. LepA subfamily.

It localises to the mitochondrion inner membrane. The enzyme catalyses GTP + H2O = GDP + phosphate + H(+). Functionally, promotes mitochondrial protein synthesis. May act as a fidelity factor of the translation reaction, by catalyzing a one-codon backward translocation of tRNAs on improperly translocated ribosomes. Binds to mitochondrial ribosomes in a GTP-dependent manner. The polypeptide is Translation factor GUF1 homolog, mitochondrial (Trichoplax adhaerens (Trichoplax reptans)).